The primary structure comprises 169 residues: MRIKILLLVLPFFAFASEHGGVNYDIIERALNFLLFFGILLYFIAKPLKDLYQSRIDKIAGKLESIQEKLRASKLKKDDALKRVEEAKLNASSLVETARKEAVNLAQKVKKDAELEMANIQKSFKDQKDFEERKTTKNVVSEILNDIFASDSLKVDQKELINIILKKVG.

A helical transmembrane segment spans residues isoleucine 3 to asparagine 23.

Belongs to the ATPase B chain family. In terms of assembly, F-type ATPases have 2 components, F(1) - the catalytic core - and F(0) - the membrane proton channel. F(1) has five subunits: alpha(3), beta(3), gamma(1), delta(1), epsilon(1). F(0) has three main subunits: a(1), b(2) and c(10-14). The alpha and beta chains form an alternating ring which encloses part of the gamma chain. F(1) is attached to F(0) by a central stalk formed by the gamma and epsilon chains, while a peripheral stalk is formed by the delta and b chains.

It is found in the cell inner membrane. Its function is as follows. F(1)F(0) ATP synthase produces ATP from ADP in the presence of a proton or sodium gradient. F-type ATPases consist of two structural domains, F(1) containing the extramembraneous catalytic core and F(0) containing the membrane proton channel, linked together by a central stalk and a peripheral stalk. During catalysis, ATP synthesis in the catalytic domain of F(1) is coupled via a rotary mechanism of the central stalk subunits to proton translocation. Functionally, component of the F(0) channel, it forms part of the peripheral stalk, linking F(1) to F(0). The polypeptide is ATP synthase subunit b (Campylobacter curvus (strain 525.92)).